The primary structure comprises 1092 residues: Extended synaptotagmin-1 (1092 aa).

Met-1 carries the post-translational modification N-acetylmethionine. The Cytoplasmic segment spans residues 1–28; it reads MEHSPEEGASPEPSGQPPATDSTRDGGS. A disordered region spans residues 1 to 36; sequence MEHSPEEGASPEPSGQPPATDSTRDGGSGVPPAGPG. A helical membrane pass occupies residues 29–49; it reads GVPPAGPGAASEALAVLTSFG. The Lumenal segment spans residues 50 to 52; the sequence is RRL. The helical transmembrane segment at 53–73 threads the bilayer; sequence LVLVPVYLAGAAGLSVGFVLF. Topologically, residues 74-1092 are cytoplasmic; it reads GLALYLGWRR…LMDDRDKGGS (1019 aa). An SMP-LTD domain is found at 125-303; that stretch reads DVEKAEWLNK…LPNRLLVPLV (179 aa). C2 domains lie at 302–423, 444–570, 616–738, and 769–886; these read LVPD…DNWY, DAEK…QLSS, DAPP…DEWL, and QVNS…ALSG. Ser-314 bears the Phosphoserine; by CDK5 mark. Ca(2+) is bound by residues Lys-334, Asp-335, Asp-347, Asp-394, Asp-396, Asp-398, Asp-400, and Asp-401. Positions 604 to 628 are disordered; sequence WDRESLETGSSVDAPPRPYHTTPNS. Residue Lys-804 is modified to N6-acetyllysine. Ser-807 carries the post-translational modification Phosphoserine. Residues 909–937 are disordered; it reads HSHSYSHSHSSSSLNDEPEALGGPTHPAS. Low complexity predominate over residues 911-921; sequence HSYSHSHSSSS. 2 positions are modified to phosphoserine: Ser-937 and Ser-951. One can recognise a C2 5 domain in the interval 959–1081; sequence PLGQVKLTVW…DLSQGAAQWY (123 aa). Tyr-997 carries the phosphotyrosine modification. The interval 1006 to 1013 is required for phosphatidylinositol 4,5-bisphosphate-dependent location at the cell membrane; it reads KNRSTKRK.

The protein belongs to the extended synaptotagmin family. As to quaternary structure, interacts with ESYT2 and ESYT3. Interacts with ADGRD1; inhibiting the G-protein-coupled receptor activity of ADGRD1. Interaction with ADGRD1 is abolished when cytosolic calcium increases, relieving ADGRD1 G-protein-coupled receptor activity. Interacts (phosphorylated form) with SLC2A4. In terms of processing, phosphorylated on Ser residues in insulin-treated adipocytes (in vitro); this promotes interaction with SLC2A4.

Its subcellular location is the endoplasmic reticulum membrane. The protein resides in the cell membrane. Functionally, binds calcium (via the C2 domains) and translocates to sites of contact between the endoplasmic reticulum and the cell membrane in response to increased cytosolic calcium levels. Helps tether the endoplasmic reticulum to the cell membrane and promotes the formation of appositions between the endoplasmic reticulum and the cell membrane. Acts as an inhibitor of ADGRD1 G-protein-coupled receptor activity in absence of cytosolic calcium. Binds glycerophospholipids in a barrel-like domain and may play a role in cellular lipid transport. This chain is Extended synaptotagmin-1 (Esyt1), found in Mus musculus (Mouse).